An 872-amino-acid polypeptide reads, in one-letter code: MKELSSAQIRQMWLDFWKSKGHCVEPSANLVPVNDPTLLWINSGVATLKKYFDGSVIPENPRITNAQKSIRTNDIENVGKTARHHTMFEMLGNFSIGDYFRNEAIGWGFELLTSPEWFDFPKDKLYMTYYPDDKDSYNRWIACGVEPSHLVPIEDNFWEIGAGPSGPDTEIFFDRGEDFDPENIGIRLLAEDIENDRYIEIWNIVLSQFNADPAVPRSEYKELPNKNIDTGAGLERLAAVMQGAKTNFETDLFMPIIREVEKLSGKTYDPDGDNMSFKVIADHIRALLFAIGDGALPGNEGRGYVLRRLLRRAVMHGRRLGINETFLYKLVLTVGQIMESYYPEVLEKRDFIEKIVKREEETFARTIDAGSGHLDSLLAQLKAEGKDTLEGKDIFKLYDTYGFPVELTEELAEDAGYKIDHEGFKSAMKEQQDRARAAVVKGGSMGMQNETLAGIVEESRFEYDTYSLESSLSVIIADNERTEAVSEGQALLVFAQTPFYAEMGGQVADTGRIKNDKGDTVAEVVDVQKAPNGQPLHTVNVLASLSVGTNYTLEINKERRLAVEKNHTATHLLHAALHNVIGEHATQAGSLNEEEFLRFDFTHFEAVSNEELRHIEQEVNEQIWNALTITTTETDVETAKERGAMALFGEKYGKVVRVVQIGNYSVELCGGTHLNNSSEIGLFKIVKEEGIGSGTRRIIAVTGRQAFEAYRNQEDALKEIAATVKAPQLKDAAAKVQALSDSLRDFQKENAELKEKAAAAAAGDVFKDVQEAKGVRFIASQVDVADAGALRTFADNWKQKDYSDVLVLVAAIGEKVNVLVASKTKDVHAGNMIKELAPIVAGRGGGKPDMAMAGGSDASKIAELLAAVAETV.

His-567, His-571, Cys-669, and His-673 together coordinate Zn(2+).

Belongs to the class-II aminoacyl-tRNA synthetase family. It depends on Zn(2+) as a cofactor.

The protein localises to the cytoplasm. The catalysed reaction is tRNA(Ala) + L-alanine + ATP = L-alanyl-tRNA(Ala) + AMP + diphosphate. Its function is as follows. Catalyzes the attachment of alanine to tRNA(Ala) in a two-step reaction: alanine is first activated by ATP to form Ala-AMP and then transferred to the acceptor end of tRNA(Ala). Also edits incorrectly charged Ser-tRNA(Ala) and Gly-tRNA(Ala) via its editing domain. This chain is Alanine--tRNA ligase, found in Streptococcus pyogenes serotype M18 (strain MGAS8232).